The chain runs to 170 residues: Acireductone dioxygenase (170 aa).

Residues H99, H101, E105, and H144 each contribute to the Fe(2+) site. Positions 99, 101, 105, and 144 each coordinate Ni(2+).

It belongs to the acireductone dioxygenase (ARD) family. Monomer. The cofactor is Fe(2+). Requires Ni(2+) as cofactor.

It carries out the reaction 1,2-dihydroxy-5-(methylsulfanyl)pent-1-en-3-one + O2 = 3-(methylsulfanyl)propanoate + CO + formate + 2 H(+). It catalyses the reaction 1,2-dihydroxy-5-(methylsulfanyl)pent-1-en-3-one + O2 = 4-methylsulfanyl-2-oxobutanoate + formate + 2 H(+). It functions in the pathway amino-acid biosynthesis; L-methionine biosynthesis via salvage pathway; L-methionine from S-methyl-5-thio-alpha-D-ribose 1-phosphate: step 5/6. Functionally, catalyzes 2 different reactions between oxygen and the acireductone 1,2-dihydroxy-3-keto-5-methylthiopentene (DHK-MTPene) depending upon the metal bound in the active site. Fe-containing acireductone dioxygenase (Fe-ARD) produces formate and 2-keto-4-methylthiobutyrate (KMTB), the alpha-ketoacid precursor of methionine in the methionine recycle pathway. Ni-containing acireductone dioxygenase (Ni-ARD) produces methylthiopropionate, carbon monoxide and formate, and does not lie on the methionine recycle pathway. The protein is Acireductone dioxygenase of Bacillus cereus (strain ZK / E33L).